We begin with the raw amino-acid sequence, 95 residues long: Phosphoribosyl-ATP pyrophosphatase (95 aa).

Belongs to the PRA-PH family.

Its subcellular location is the cytoplasm. The enzyme catalyses 1-(5-phospho-beta-D-ribosyl)-ATP + H2O = 1-(5-phospho-beta-D-ribosyl)-5'-AMP + diphosphate + H(+). It functions in the pathway amino-acid biosynthesis; L-histidine biosynthesis; L-histidine from 5-phospho-alpha-D-ribose 1-diphosphate: step 2/9. The polypeptide is Phosphoribosyl-ATP pyrophosphatase (Sulfolobus acidocaldarius (strain ATCC 33909 / DSM 639 / JCM 8929 / NBRC 15157 / NCIMB 11770)).